The sequence spans 138 residues: Large ribosomal subunit protein eL27 (138 aa).

The protein belongs to the eukaryotic ribosomal protein eL27 family.

The polypeptide is Large ribosomal subunit protein eL27 (RPL27) (Solanum tuberosum (Potato)).